The primary structure comprises 736 residues: Polyribonucleotide nucleotidyltransferase (736 aa).

Residues Asp493 and Asp499 each contribute to the Mg(2+) site. Residues 560–619 form the KH domain; the sequence is PQHAELVVNPDAIRMIIGPGGKNIKQITTVTGAAIDINDSGKISIFAPTSEAMEQAKQMI. The 75-residue stretch at 629–703 folds into the S1 motif domain; the sequence is GKNYKGKVRK…SRKAVLLEEE (75 aa). Residues 710-736 form a disordered region; that stretch reads EESSRFSKGNRNGDRSRHNNRERTRRT. Positions 720–736 are enriched in basic and acidic residues; it reads RNGDRSRHNNRERTRRT.

The protein belongs to the polyribonucleotide nucleotidyltransferase family. Mg(2+) serves as cofactor.

Its subcellular location is the cytoplasm. It carries out the reaction RNA(n+1) + phosphate = RNA(n) + a ribonucleoside 5'-diphosphate. Involved in mRNA degradation. Catalyzes the phosphorolysis of single-stranded polyribonucleotides processively in the 3'- to 5'-direction. This is Polyribonucleotide nucleotidyltransferase from Lawsonia intracellularis (strain PHE/MN1-00).